The following is a 111-amino-acid chain: Small ribosomal subunit protein uS10 (111 aa).

Belongs to the universal ribosomal protein uS10 family. Part of the 30S ribosomal subunit.

In terms of biological role, involved in the binding of tRNA to the ribosomes. The chain is Small ribosomal subunit protein uS10 from Xanthomonas euvesicatoria pv. vesicatoria (strain 85-10) (Xanthomonas campestris pv. vesicatoria).